The chain runs to 249 residues: Orotidine 5'-phosphate decarboxylase (249 aa).

Substrate contacts are provided by residues aspartate 18, lysine 40, 67–76 (DLKYHDIPNT), threonine 127, arginine 188, glutamine 197, glycine 217, and arginine 218. Residue lysine 69 is the Proton donor of the active site.

This sequence belongs to the OMP decarboxylase family. Type 1 subfamily. As to quaternary structure, homodimer.

It carries out the reaction orotidine 5'-phosphate + H(+) = UMP + CO2. It functions in the pathway pyrimidine metabolism; UMP biosynthesis via de novo pathway; UMP from orotate: step 2/2. In terms of biological role, catalyzes the decarboxylation of orotidine 5'-monophosphate (OMP) to uridine 5'-monophosphate (UMP). The protein is Orotidine 5'-phosphate decarboxylase of Baumannia cicadellinicola subsp. Homalodisca coagulata.